Consider the following 165-residue polypeptide: Small ribosomal subunit protein uS5 (165 aa).

The S5 DRBM domain maps to 10–73 (LKEKVVSISR…EDAKKNLVEV (64 aa)).

The protein belongs to the universal ribosomal protein uS5 family. Part of the 30S ribosomal subunit. Contacts proteins S4 and S8.

With S4 and S12 plays an important role in translational accuracy. Functionally, located at the back of the 30S subunit body where it stabilizes the conformation of the head with respect to the body. This is Small ribosomal subunit protein uS5 from Clostridium perfringens (strain ATCC 13124 / DSM 756 / JCM 1290 / NCIMB 6125 / NCTC 8237 / Type A).